Reading from the N-terminus, the 149-residue chain is Calmodulin-1 (149 aa).

Position 2 is an N-acetylalanine (Ala2). EF-hand domains lie at 8–43, 44–79, 81–116, and 117–149; these read EQIAEFKEAFSLFDKDGDGCITTKELGTVMRSLGQN, PTEAELQDMISEADADQNGTIDFPEFLNLMARKMKD, DSEEELKEAFKVFDKDQNGFISAAELRHVMTNLGEK, and LTDEEVDEMIREADIDGDGQVNYEEFVRMMLAK. Ca(2+)-binding residues include Asp21, Asp23, Asp25, Cys27, Glu32, Asp57, Asp59, Asn61, Thr63, Glu68, Asp94, Asp96, Asn98, and Glu105. An N6,N6,N6-trimethyllysine modification is found at Lys116. Residues Asp130, Asp132, Asp134, Gln136, and Glu141 each coordinate Ca(2+).

The protein belongs to the calmodulin family. In terms of tissue distribution, high expression in stolon tips and stems, moderate in roots, and very low in leaves. Localized in the meristematic regions of the shoot and root tips, the tip of the developing tuber and the vascular zones of petiole and tuber. Not detected in mesophyll cells.

Calmodulin mediates the control of a large number of enzymes, ion channels and other proteins by Ca(2+). Among the enzymes to be stimulated by the calmodulin-Ca(2+) complex are a number of protein kinases and phosphatases. The polypeptide is Calmodulin-1 (PCM1) (Solanum tuberosum (Potato)).